The primary structure comprises 184 residues: CKLF-like MARVEL transmembrane domain-containing protein 3 (184 aa).

Acidic residues predominate over residues 1–12 (MWPPDAEPEPDP). The segment at 1 to 22 (MWPPDAEPEPDPESAHGPRSGR) is disordered. Residues 36 to 155 (FLCSLKGRLL…DFYLIFNEVA (120 aa)) form the MARVEL domain. The next 3 helical transmembrane spans lie at 64 to 84 (ASAF…FLFA), 96 to 116 (LCWP…YFVI), and 131 to 151 (AAGV…YLIF). The disordered stretch occupies residues 163-184 (SGNETTAHRTEEENSNSDSDSD). A compositionally biased stretch (acidic residues) spans 175 to 184 (ENSNSDSDSD).

This sequence belongs to the chemokine-like factor family.

The protein resides in the membrane. The protein is CKLF-like MARVEL transmembrane domain-containing protein 3 (Cmtm3) of Mus musculus (Mouse).